Consider the following 511-residue polypeptide: Cytochrome P450 4B1 (511 aa).

Residues Glu-315 and Cys-453 each contribute to the heme site.

This sequence belongs to the cytochrome P450 family. Heme serves as cofactor.

The protein localises to the endoplasmic reticulum membrane. It is found in the microsome membrane. The catalysed reaction is an organic molecule + reduced [NADPH--hemoprotein reductase] + O2 = an alcohol + oxidized [NADPH--hemoprotein reductase] + H2O + H(+). Functionally, cytochromes P450 are a group of heme-thiolate monooxygenases. In liver microsomes, this enzyme is involved in an NADPH-dependent electron transport pathway. It oxidizes a variety of structurally unrelated compounds, including steroids, fatty acids, and xenobiotics. This chain is Cytochrome P450 4B1 (Cyp4b1), found in Rattus norvegicus (Rat).